The sequence spans 520 residues: Nucleobase-ascorbate transporter 1 (520 aa).

Helical transmembrane passes span 36–56, 64–84, 86–106, 129–149, 150–170, 174–194, 213–233, 279–299, 362–382, 384–404, 415–435, and 453–473; these read YILMLGTSAFIPALLVPAMGG, VIQTLLFVAGIKTLLQALFGT, LPAVVGGSLAYVVPIAYIIND, ALIVASSIQIILGYSQVWGLF, SRFFSPLGMAPVVGLVGLGMF, FPQLGNCIEIGLPMLLLVIGL, FPILICVTIVWIYAVILTASG, FAMMSAVLVSMVESTGAYIAA, GFMIVFSTLGKFGAVFASIPV, IYAALHCILFGLVAAVGLSFL, LMITGLSLFLGISIPQFFAQY, and AFLNTLFMSPATVGLIIAVFM.

The protein belongs to the nucleobase:cation symporter-2 (NCS2) (TC 2.A.40) family. In terms of tissue distribution, expressed in cotyledons 4 days after imbibition (DAI). Expressed in the minor and major veins of cotyledons and leaves, in the shoot apex and pedicels. Expressed in the root meristems, root tips and lateral root primordia.

The protein resides in the membrane. The sequence is that of Nucleobase-ascorbate transporter 1 (NAT1) from Arabidopsis thaliana (Mouse-ear cress).